Consider the following 620-residue polypeptide: NADPH-dependent diflavin oxidoreductase 1 (620 aa).

One can recognise a Flavodoxin-like domain in the interval 6–168 (IAILYGSETG…VYSEFEKRVL (163 aa)). FMN contacts are provided by residues 12–17 (SETGTA), 59–62 (STTG), and 106–115 (LGDSSYSKFN). The 254-residue stretch at 222 to 475 (SSVKYGTVVT…LLPAGKQDRP (254 aa)) folds into the FAD-binding FR-type domain. FAD contacts are provided by residues R380, 410–413 (RFFS), and 442–445 (GLCT). Residue 535-536 (SR) coordinates NADP(+). W620 provides a ligand contact to FAD.

Belongs to the NADPH-dependent diflavin oxidoreductase NDOR1 family. The protein in the N-terminal section; belongs to the flavodoxin family. This sequence in the C-terminal section; belongs to the flavoprotein pyridine nucleotide cytochrome reductase family. Interacts with DRE2; as part of the cytosolic iron-sulfur (Fe-S) protein assembly (CIA) machinery. Requires FAD as cofactor. The cofactor is FMN.

The protein resides in the cytoplasm. It is found in the mitochondrion. It catalyses the reaction 2 oxidized [2Fe-2S]-[protein] + NADPH = 2 reduced [2Fe-2S]-[protein] + NADP(+) + H(+). In terms of biological role, NADPH-dependent reductase which is a central component of the cytosolic iron-sulfur (Fe-S) protein assembly (CIA) machinery. Transfers electrons from NADPH via its FAD and FMN prosthetic groups to the [2Fe-2S] cluster of DRE2, another key component of the CIA machinery. In turn, this reduced cluster provides electrons for assembly of cytosolic iron-sulfur cluster proteins. Positively controls H(2)O(2)-induced cell death. In Eremothecium gossypii (strain ATCC 10895 / CBS 109.51 / FGSC 9923 / NRRL Y-1056) (Yeast), this protein is NADPH-dependent diflavin oxidoreductase 1.